The primary structure comprises 215 residues: Kunitz trypsin inhibitor 2 (215 aa).

Positions 1–23 are cleaved as a signal peptide; it reads MKNPSVISFLIILLFAATICTHG. The cysteines at positions 67 and 114 are disulfide-linked. Residue asparagine 145 is glycosylated (N-linked (GlcNAc...) asparagine).

Belongs to the protease inhibitor I3 (leguminous Kunitz-type inhibitor) family. As to quaternary structure, interacts with RD21A. Interacts with RD21B and RD21C. Expressed in vascular bundles of the carpels, the transmitting tract of the style and septum epidermis. Expressed in etiolated seedlings.

The protein localises to the secreted. The protein resides in the cell wall. Its subcellular location is the extracellular space. It is found in the apoplast. It localises to the endoplasmic reticulum. Its function is as follows. Water-soluble and chlorophyll-binding protein that probably does not function as a chloroplast chlorophyll carrier and is not involved in photosynthesis. Involved in the control of cell death in the transmitting tract and septum epidermis during flower development. Binds and inhibits the activity of the cysteine protease RD21A as a pro-death protein. May play a role in herbivore resistance activation during seedling greening. This Arabidopsis thaliana (Mouse-ear cress) protein is Kunitz trypsin inhibitor 2.